A 442-amino-acid polypeptide reads, in one-letter code: tRNA-2-methylthio-N(6)-dimethylallyladenosine synthase (442 aa).

The 116-residue stretch at 2 to 117 folds into the MTTase N-terminal domain; the sequence is QGLYIKSYGC…LPELIIKARR (116 aa). Residues Cys-11, Cys-47, Cys-80, Cys-157, Cys-161, and Cys-164 each coordinate [4Fe-4S] cluster. The 232-residue stretch at 143 to 374 folds into the Radical SAM core domain; that stretch reads KNQEVSAFIS…QELLREQQLA (232 aa). A TRAM domain is found at 377–442; sequence RNMIGQTCSV…QNSVTGIVVN (66 aa).

The protein belongs to the methylthiotransferase family. MiaB subfamily. As to quaternary structure, monomer. The cofactor is [4Fe-4S] cluster.

The protein localises to the cytoplasm. It carries out the reaction N(6)-dimethylallyladenosine(37) in tRNA + (sulfur carrier)-SH + AH2 + 2 S-adenosyl-L-methionine = 2-methylsulfanyl-N(6)-dimethylallyladenosine(37) in tRNA + (sulfur carrier)-H + 5'-deoxyadenosine + L-methionine + A + S-adenosyl-L-homocysteine + 2 H(+). In terms of biological role, catalyzes the methylthiolation of N6-(dimethylallyl)adenosine (i(6)A), leading to the formation of 2-methylthio-N6-(dimethylallyl)adenosine (ms(2)i(6)A) at position 37 in tRNAs that read codons beginning with uridine. In Ehrlichia chaffeensis (strain ATCC CRL-10679 / Arkansas), this protein is tRNA-2-methylthio-N(6)-dimethylallyladenosine synthase.